The sequence spans 253 residues: Phycoerythrobilin:ferredoxin oxidoreductase (253 aa).

Belongs to the HY2 family.

It catalyses the reaction (3Z)-phycoerythrobilin + oxidized 2[4Fe-4S]-[ferredoxin] = 15,16-dihydrobiliverdin + reduced 2[4Fe-4S]-[ferredoxin] + 2 H(+). Functionally, catalyzes the two-electron reduction of the C2 and C3(1) diene system of 15,16-dihydrobiliverdin. This Prochlorococcus marinus (strain AS9601) protein is Phycoerythrobilin:ferredoxin oxidoreductase.